The sequence spans 254 residues: Peptide methionine sulfoxide reductase A5 (254 aa).

Residues 1–33 form the signal peptide; sequence MAISLKRNRFFIPYTNLVFFFFLCVSLLDKTVS.

The protein belongs to the MsrA Met sulfoxide reductase family.

The catalysed reaction is L-methionyl-[protein] + [thioredoxin]-disulfide + H2O = L-methionyl-(S)-S-oxide-[protein] + [thioredoxin]-dithiol. The enzyme catalyses [thioredoxin]-disulfide + L-methionine + H2O = L-methionine (S)-S-oxide + [thioredoxin]-dithiol. Its function is as follows. Catalyzes the reduction of methionine sulfoxide (MetSO) to methionine in proteins. Plays a protective role against oxidative stress by restoring activity to proteins that have been inactivated by methionine oxidation. MSRA family specifically reduces the MetSO S-enantiomer. The chain is Peptide methionine sulfoxide reductase A5 (MSRA5) from Arabidopsis thaliana (Mouse-ear cress).